We begin with the raw amino-acid sequence, 221 residues long: Redox-sensing transcriptional repressor Rex (221 aa).

The segment at residues 17-56 (IYYYYLSSLHEAGIKRINSTEISEAIKFDAATVRRDFSYF) is a DNA-binding region (H-T-H motif). Residue 91–96 (GTGNLG) participates in NAD(+) binding.

The protein belongs to the transcriptional regulatory Rex family. As to quaternary structure, homodimer.

The protein localises to the cytoplasm. Its function is as follows. Modulates transcription in response to changes in cellular NADH/NAD(+) redox state. This Oenococcus oeni (strain ATCC BAA-331 / PSU-1) protein is Redox-sensing transcriptional repressor Rex.